Here is an 814-residue protein sequence, read N- to C-terminus: Glycogen phosphorylase (814 aa).

At Lys-662 the chain carries N6-(pyridoxal phosphate)lysine.

The protein belongs to the glycogen phosphorylase family. Pyridoxal 5'-phosphate is required as a cofactor.

It catalyses the reaction [(1-&gt;4)-alpha-D-glucosyl](n) + phosphate = [(1-&gt;4)-alpha-D-glucosyl](n-1) + alpha-D-glucose 1-phosphate. In terms of biological role, phosphorylase is an important allosteric enzyme in carbohydrate metabolism. Enzymes from different sources differ in their regulatory mechanisms and in their natural substrates. However, all known phosphorylases share catalytic and structural properties. The protein is Glycogen phosphorylase (glgP) of Chlamydia trachomatis serovar D (strain ATCC VR-885 / DSM 19411 / UW-3/Cx).